The chain runs to 397 residues: Elongation factor Tu (397 aa).

In terms of domain architecture, tr-type G spans 10–207 (KPHVNIGTIG…ACDSYIEEPE (198 aa)). Positions 19 to 26 (GHIDHGKT) are G1. Position 19–26 (19–26 (GHIDHGKT)) interacts with GTP. Thr26 contributes to the Mg(2+) binding site. Positions 60-64 (GITIA) are G2. A G3 region spans residues 81-84 (DCPG). Residues 81 to 85 (DCPGH) and 136 to 139 (NKCD) contribute to the GTP site. Residues 136–139 (NKCD) form a G4 region. A G5 region spans residues 174 to 176 (SAL).

This sequence belongs to the TRAFAC class translation factor GTPase superfamily. Classic translation factor GTPase family. EF-Tu/EF-1A subfamily. Monomer.

Its subcellular location is the cytoplasm. It carries out the reaction GTP + H2O = GDP + phosphate + H(+). In terms of biological role, GTP hydrolase that promotes the GTP-dependent binding of aminoacyl-tRNA to the A-site of ribosomes during protein biosynthesis. In Maridesulfovibrio salexigens (strain ATCC 14822 / DSM 2638 / NCIMB 8403 / VKM B-1763) (Desulfovibrio salexigens), this protein is Elongation factor Tu.